The primary structure comprises 196 residues: Peptidyl-tRNA hydrolase (196 aa).

His15 serves as a coordination point for tRNA. The Proton acceptor role is filled by His20. Tyr66, Asn68, and Asn114 together coordinate tRNA.

Belongs to the PTH family. Monomer.

It is found in the cytoplasm. The catalysed reaction is an N-acyl-L-alpha-aminoacyl-tRNA + H2O = an N-acyl-L-amino acid + a tRNA + H(+). Its function is as follows. Hydrolyzes ribosome-free peptidyl-tRNAs (with 1 or more amino acids incorporated), which drop off the ribosome during protein synthesis, or as a result of ribosome stalling. Functionally, catalyzes the release of premature peptidyl moieties from peptidyl-tRNA molecules trapped in stalled 50S ribosomal subunits, and thus maintains levels of free tRNAs and 50S ribosomes. In Polynucleobacter necessarius subsp. necessarius (strain STIR1), this protein is Peptidyl-tRNA hydrolase.